The chain runs to 305 residues: Peroxisome assembly protein 26 (305 aa).

Residues 1–25 (MKSDCSTSAAPFRGLGGPLRSSEPV) form a disordered region. At 1 to 246 (MKSDCSTSAA…RQLWDSAVSH (246 aa)) the chain is on the cytoplasmic side. The helical; Signal-anchor for type II membrane protein transmembrane segment at 247–267 (FFSLPFKKSLLAALILCLLVV) threads the bilayer. Residues 268–305 (RFDPASPSSLPSLYKLAQLFRWIRKAASSRLYQLRIRD) lie on the Peroxisomal matrix side of the membrane.

This sequence belongs to the peroxin-26 family. Interacts (via its cytoplasmic domain) with PEX6; interaction is direct and is ATP-dependent. Interacts with PEX1; interaction is indirect and is mediated via interaction with PEX6.

The protein localises to the peroxisome membrane. Peroxisomal docking factor that anchors PEX1 and PEX6 to peroxisome membranes. PEX26 is therefore required for the formation of the PEX1-PEX6 AAA ATPase complex, a complex that mediates the extraction of the PEX5 receptor from peroxisomal membrane. In Macaca fascicularis (Crab-eating macaque), this protein is Peroxisome assembly protein 26 (PEX26).